The following is a 532-amino-acid chain: Invertase 1 (532 aa).

The N-terminal stretch at M1–A19 is a signal peptide. The N-linked (GlcNAc...) asparagine glycan is linked to N23. Substrate-binding positions include W39–D42 and Q60. D42 is an active-site residue. N64 carries N-linked (GlcNAc...) asparagine glycosylation. Y102–S103 lines the substrate pocket. 4 N-linked (GlcNAc...) asparagine glycosylation sites follow: N111, N112, N118, and N165. Substrate contacts are provided by residues R170–D171 and E223. N-linked (GlcNAc...) asparagine glycosylation is present at N275. W311 serves as a coordination point for substrate. 5 N-linked (GlcNAc...) asparagine glycosylation sites follow: N356, N369, N384, N398, and N512.

Belongs to the glycosyl hydrolase 32 family. In terms of processing, isoform Secreted is glycosylated. Isoform Intracellular is not glycosylated.

Its subcellular location is the cytoplasm. It localises to the secreted. The catalysed reaction is Hydrolysis of terminal non-reducing beta-D-fructofuranoside residues in beta-D-fructofuranosides.. This is Invertase 1 (SUC1) from Saccharomyces cerevisiae (Baker's yeast).